A 370-amino-acid chain; its full sequence is Subtilisin-like protease (370 aa).

An N-terminal signal peptide occupies residues 1 to 17 (MIASIVFFIVLVDGVAT). Catalysis depends on charge relay system residues D13, H35, and S190. Residues 18–261 (GSPNALVTDF…FGEVSPSRLE (244 aa)) form the Peptidase S8 domain. A P/Homo B domain is found at 240-370 (RVTDRWTHRN…TTEGTCHGIR (131 aa)).

Belongs to the peptidase S8 family.

This Ictalurid herpesvirus 1 (strain Auburn) (IcHV-1) protein is Subtilisin-like protease (ORF47).